A 61-amino-acid chain; its full sequence is MAVQQNRKSRSRRDMRRSHDALTENALTVDQATGETHRRHHVTKDGFYRGRQLFAKAADAE.

The segment at 1 to 44 (MAVQQNRKSRSRRDMRRSHDALTENALTVDQATGETHRRHHVTK) is disordered. A compositionally biased stretch (basic residues) spans 7–16 (RKSRSRRDMR). The segment covering 25–34 (NALTVDQATG) has biased composition (polar residues).

Belongs to the bacterial ribosomal protein bL32 family.

In Acinetobacter baumannii (strain AB307-0294), this protein is Large ribosomal subunit protein bL32.